The following is a 451-amino-acid chain: Exodeoxyribonuclease 7 large subunit (451 aa).

The protein belongs to the XseA family. Heterooligomer composed of large and small subunits.

Its subcellular location is the cytoplasm. The catalysed reaction is Exonucleolytic cleavage in either 5'- to 3'- or 3'- to 5'-direction to yield nucleoside 5'-phosphates.. Functionally, bidirectionally degrades single-stranded DNA into large acid-insoluble oligonucleotides, which are then degraded further into small acid-soluble oligonucleotides. The chain is Exodeoxyribonuclease 7 large subunit from Neisseria meningitidis serogroup B (strain ATCC BAA-335 / MC58).